The primary structure comprises 316 residues: 4-hydroxyphenylacetate decarboxylase activating enzyme (316 aa).

The region spanning 20-307 (HDGPGCRTTV…QDIFLDNGIA (288 aa)) is the Radical SAM core domain. Positions 34, 38, 41, 60, 66, 69, and 105 each coordinate [4Fe-4S] cluster. Residue 40 to 42 (WCA) participates in S-adenosyl-L-methionine binding. The 32-residue stretch at 84–115 (NKPVIDWNICKDCESFECVNSCYYNAFKLCAK) folds into the 4Fe-4S ferredoxin-type domain. S-adenosyl-L-methionine is bound by residues Gly144, 193-195 (DIK), and His267.

This sequence belongs to the organic radical-activating enzymes family. In terms of assembly, monomer. It depends on [4Fe-4S] cluster as a cofactor.

It carries out the reaction glycyl-[protein] + reduced [flavodoxin] + S-adenosyl-L-methionine = glycin-2-yl radical-[protein] + semiquinone [flavodoxin] + 5'-deoxyadenosine + L-methionine + H(+). In terms of biological role, catalyzes activation of 4-hydroxyphenylacetate decarboxylase under anaerobic conditions by generation of an organic free radical on a glycine residue, via a homolytic cleavage of S-adenosyl-L-methionine (SAM). The polypeptide is 4-hydroxyphenylacetate decarboxylase activating enzyme (Clostridioides difficile (strain CD196) (Peptoclostridium difficile)).